A 249-amino-acid chain; its full sequence is Pleckstrin homology domain-containing family F member 2 (249 aa).

Ser16 carries the phosphoserine modification. The PH domain maps to 35–131 (VLIGEGVLTK…WMNHINKCVT (97 aa)). At Lys44 the chain carries N6-acetyllysine. Residues 152 to 212 (DSEATVCMRC…ICDFCYDLLS (61 aa)) form an FYVE-type zinc finger. Residues Cys158, Cys161, Cys175, Cys178, Cys183, Cys186, Cys204, and Cys207 each coordinate Zn(2+). The segment covering 221–233 (PARSDSYSQSLKS) has biased composition (polar residues). The interval 221–249 (PARSDSYSQSLKSPLNDMSDDDDDDDSSD) is disordered. The segment covering 238-249 (MSDDDDDDDSSD) has biased composition (acidic residues). 2 positions are modified to phosphoserine: Ser239 and Ser248.

In terms of assembly, may interact with EEA1. Expressed in placenta, ovary and small intestine, as well as in heart and pancreas. Also expressed in peripheral blood mononuclear cells and dendritic cells.

It localises to the early endosome membrane. Its subcellular location is the endoplasmic reticulum. Its function is as follows. May play a role in early endosome fusion upstream of RAB5, hence regulating receptor trafficking and fluid-phase transport. Enhances cellular sensitivity to TNF-induced apoptosis. The protein is Pleckstrin homology domain-containing family F member 2 (PLEKHF2) of Homo sapiens (Human).